The following is a 329-amino-acid chain: Carbonic anhydrase (329 aa).

The tract at residues 1 to 108 (MSTASAFAIN…AAARIDQITA (108 aa)) is chloroplast transit peptide-like.

The protein belongs to the beta-class carbonic anhydrase family. As to quaternary structure, homohexamer.

Its subcellular location is the cytoplasm. The enzyme catalyses hydrogencarbonate + H(+) = CO2 + H2O. In terms of biological role, reversible hydration of carbon dioxide. This Flaveria pringlei protein is Carbonic anhydrase.